The primary structure comprises 510 residues: 2,3-bisphosphoglycerate-independent phosphoglycerate mutase (510 aa).

2 residues coordinate Mn(2+): aspartate 13 and serine 63. Residue serine 63 is the Phosphoserine intermediate of the active site. Substrate contacts are provided by residues histidine 124, 154–155 (RD), arginine 186, arginine 192, 262–265 (RADR), and lysine 334. Mn(2+)-binding residues include aspartate 401, histidine 405, aspartate 442, histidine 443, and histidine 461.

This sequence belongs to the BPG-independent phosphoglycerate mutase family. As to quaternary structure, monomer. The cofactor is Mn(2+).

It catalyses the reaction (2R)-2-phosphoglycerate = (2R)-3-phosphoglycerate. It functions in the pathway carbohydrate degradation; glycolysis; pyruvate from D-glyceraldehyde 3-phosphate: step 3/5. In terms of biological role, catalyzes the interconversion of 2-phosphoglycerate and 3-phosphoglycerate. In Vibrio atlanticus (strain LGP32) (Vibrio splendidus (strain Mel32)), this protein is 2,3-bisphosphoglycerate-independent phosphoglycerate mutase.